A 687-amino-acid polypeptide reads, in one-letter code: Fork-head transcriptional regulator 2 (687 aa).

The disordered stretch occupies residues 1 to 23 (MSAQFITPKKRPHSPLDSNELLP). In terms of domain architecture, FHA spans 82-146 (VSIGRNIELS…NGARIDGQKV (65 aa)). A compositionally biased stretch (polar residues) spans 226 to 241 (SPSSISANSLQSNLDQ). Positions 226 to 246 (SPSSISANSLQSNLDQDLSKE) are disordered. The segment at residues 252–350 (KPPYSYATMI…SDGTISKTRR (99 aa)) is a DNA-binding region (fork-head). Disordered regions lie at residues 385-449 (AASI…RYTP), 472-569 (QLGR…IGLN), and 584-687 (PERG…MIDS). Low complexity predominate over residues 389-410 (PQQQKQQQQQQKRPPQQQNSQP). Over residues 411–442 (HLSQPHYTIPSNPMQTNSMGYIPQSNIYNMSN) the composition is skewed to polar residues. The segment covering 472 to 490 (QLGRPQGQLGQPMMQPQQQ) has biased composition (low complexity). The span at 491-540 (SYTSSNIKTEPSSPKRNPSISNNTPKMAKGTVSTESHSRSTSYTTTQLHE) shows a compositional bias: polar residues. Low complexity-rich tracts occupy residues 542-563 (SNFNSSANDSTSTAPTASTTTN) and 589-624 (KGNPSGTNNNNNTNNTNTNTTNNNNGKNTAGGPNTN). Residues 625 to 659 (QSSPAFWNFVQFSTPNGQSPVRKSSEEVGNNSPTL) show a composition bias toward polar residues. The Nuclear localization signal signature appears at 663-670 (IKREREND).

It is found in the nucleus. Its function is as follows. Transcription factor required for the morphogenesis of true hyphal as well as yeast cells. Contributes to virulence. This Candida albicans (strain SC5314 / ATCC MYA-2876) (Yeast) protein is Fork-head transcriptional regulator 2 (FKH2).